Reading from the N-terminus, the 73-residue chain is Large ribosomal subunit protein bL31 (73 aa).

Zn(2+)-binding residues include Cys-16, Cys-18, Cys-37, and Cys-40.

Belongs to the bacterial ribosomal protein bL31 family. Type A subfamily. In terms of assembly, part of the 50S ribosomal subunit. Zn(2+) serves as cofactor.

Binds the 23S rRNA. The chain is Large ribosomal subunit protein bL31 from Blochmanniella floridana.